We begin with the raw amino-acid sequence, 244 residues long: Trypsin (244 aa).

Residues 1-15 form the signal peptide; it reads MKFLVILVLLGAAVA. Positions 16–21 are cleaved as a propeptide — activation peptide; the sequence is FEDDDK. A Peptidase S1 domain is found at 22–242; it reads IVGGFTCAKN…FVTWIQSTIS (221 aa). Cystine bridges form between Cys28/Cys158, Cys46/Cys62, Cys130/Cys231, Cys137/Cys204, Cys169/Cys183, and Cys194/Cys218. His61 serves as the catalytic Charge relay system. Ca(2+)-binding residues include Glu73, Asn75, and Glu83. Asp105 (charge relay system) is an active-site residue. Residue Ser198 is the Charge relay system of the active site.

It belongs to the peptidase S1 family. Ca(2+) serves as cofactor.

The protein resides in the secreted. It localises to the extracellular space. The catalysed reaction is Preferential cleavage: Arg-|-Xaa, Lys-|-Xaa.. The protein is Trypsin of Xenopus laevis (African clawed frog).